We begin with the raw amino-acid sequence, 609 residues long: Actin-interacting protein 1-2 (609 aa).

12 WD repeats span residues 2–42, 54–93, 97–141, 142–182, 185–224, 230–269, 277–318, 322–362, 445–484, 489–528, 532–571, and 576–609; these read ELSE…VTLD, EHAYPATVARYSPNGEWIASGDVSGTVRIWGAYNDHVLKN, VLAG…GEFD, GHSR…FKLS, EHSNFVNCVRFAPDGSKFITVSSDKKGIIYDGKTCEILGE, GHKGSIYAVSWSPDGKQVLTVSADKSAKIWDISDNGSGSL, GSSG…KSPF, GHMK…CGKL, NLGFIVTALAVTPDGTEAVIGGQDGKLHLYSINGDSLTEE, RHRGAISVIRYSPDLSMFASADLNREAVVWDRVSREMKLK, YHSARINCLAWSPNSTMVATGSLDTCVIVYEVDKPASSRM, and AHLGGVYGLGFADDSHVVSSGEDACIRVWSFTPQ.

As to expression, expressed in leaves, stems, flower buds and flowers.

In terms of biological role, binds actin. Enhances the F-actin depolymerization activity of actin-depolymerizing factor (ADF) proteins. The protein is Actin-interacting protein 1-2 of Arabidopsis thaliana (Mouse-ear cress).